A 435-amino-acid polypeptide reads, in one-letter code: Exodeoxyribonuclease 7 large subunit (435 aa).

Positions 1–10 (MRGTRVTETA) are enriched in polar residues. 2 disordered regions span residues 1-21 (MRGT…GPPT) and 413-435 (AGKA…PRGK).

Belongs to the XseA family. Heterooligomer composed of large and small subunits.

The protein resides in the cytoplasm. It carries out the reaction Exonucleolytic cleavage in either 5'- to 3'- or 3'- to 5'-direction to yield nucleoside 5'-phosphates.. In terms of biological role, bidirectionally degrades single-stranded DNA into large acid-insoluble oligonucleotides, which are then degraded further into small acid-soluble oligonucleotides. This is Exodeoxyribonuclease 7 large subunit from Leifsonia xyli subsp. xyli (strain CTCB07).